We begin with the raw amino-acid sequence, 1242 residues long: Phosphorylase b kinase regulatory subunit alpha, skeletal muscle isoform (1242 aa).

Residues serine 630, serine 731, serine 737, serine 740, serine 760, serine 813, serine 974, serine 983, and serine 987 each carry the phosphoserine modification. The tract at residues 812–842 (LSELYVKVGEIRHWGLIRYISGILRKKVEAL) is calmodulin-binding. Serine 1009 is modified (phosphoserine; by autocatalysis). Residue serine 1020 is modified to Phosphoserine; by PKA. A phosphoserine mark is found at serine 1022 and serine 1025. A calmodulin-binding region spans residues 1065 to 1105 (SKDSRQGQWQRRRRLDGALNRVPIGFYQKVWKILQKCHGLS). Residue serine 1132 is modified to Phosphoserine. Cysteine 1239 carries S-farnesyl cysteine lipidation.

The protein belongs to the phosphorylase b kinase regulatory chain family. Hexadecamer of 4 heterotetramers, each composed of alpha, beta, gamma, and delta subunits. Alpha (PHKA1 or PHKA2) and beta (PHKB) are regulatory subunits, gamma (PHKG1 or PHKG2) is the catalytic subunit, and delta is calmodulin. Post-translationally, although the final Cys may be farnesylated, the terminal tripeptide is probably not removed, and the C-terminus is not methylated.

The protein localises to the cell membrane. The protein operates within glycan biosynthesis; glycogen metabolism. By phosphorylation of various serine residues and by calcium. Phosphorylase b kinase catalyzes the phosphorylation of serine in certain substrates, including troponin I. The alpha chain may bind calmodulin. The protein is Phosphorylase b kinase regulatory subunit alpha, skeletal muscle isoform (Phka1) of Rattus norvegicus (Rat).